Reading from the N-terminus, the 462-residue chain is MANASQLSPTNKHFFKPLLPGFQRNLNIPVKFFSEHIEGKHEGETVKLRADASKRTWEVKMDGNRLTEGWKEFVEAHDLRIRDFVVFRHEGDMVFHVTALGPSCCEIQYPQSISHEEGEESGEVEISEREVEENLQKEYDQSSADLNCFSQSVTHSNISNDLVTLPRDFAKRNGLDKGMHEIVLMNEEGKSWESEVRSRMSGQVFIVGGWKSLCSENKLKGGDSCTFKLLQNAKTPVFQLCSRIGESRFVKLTPTLNSLEIGKQHLPVSFTKGNGLIHPGEIILVDKDRVEWSMKLQVDNRGGMHIFGGNDWKSFCAANEVGAGESLTLELIRGGLSPLFKFFSKIEQPSFEAEDRRHKRARVHNGSQETDKGEPSRATKMGPELEKREKTAEKGEPSRASNKSSGKQGNLQKTQACSVTDHVAKVKESVVDTLTSIRRFQAELETMEQKLEDSLQEINKLS.

DNA-binding regions (TF-B3) lie at residues 11 to 103 (NKHF…LGPS), 148 to 243 (CFSQ…LCSR), and 249 to 346 (FVKL…FSKI). The disordered stretch occupies residues 351 to 419 (FEAEDRRHKR…NLQKTQACSV (69 aa)). Residues 369-397 (ETDKGEPSRATKMGPELEKREKTAEKGEP) are compositionally biased toward basic and acidic residues. Residues 399–418 (RASNKSSGKQGNLQKTQACS) show a composition bias toward polar residues.

The protein resides in the nucleus. This chain is B3 domain-containing protein REM8 (REM8), found in Arabidopsis thaliana (Mouse-ear cress).